Here is a 644-residue protein sequence, read N- to C-terminus: Exoribonuclease 2 (644 aa).

Residues 189 to 516 (RQDLTALNFV…NHRLLKAVIK (328 aa)) enclose the RNB domain. Positions 561–643 (NTRFAAEIID…ETRSIIARPA (83 aa)) constitute an S1 motif domain.

The protein belongs to the RNR ribonuclease family. RNase II subfamily.

Its subcellular location is the cytoplasm. It catalyses the reaction Exonucleolytic cleavage in the 3'- to 5'-direction to yield nucleoside 5'-phosphates.. Involved in mRNA degradation. Hydrolyzes single-stranded polyribonucleotides processively in the 3' to 5' direction. The protein is Exoribonuclease 2 of Salmonella paratyphi A (strain ATCC 9150 / SARB42).